Here is a 514-residue protein sequence, read N- to C-terminus: ATP synthase subunit alpha (514 aa).

170 to 177 (GDRQIGKT) contributes to the ATP binding site.

Belongs to the ATPase alpha/beta chains family. In terms of assembly, F-type ATPases have 2 components, CF(1) - the catalytic core - and CF(0) - the membrane proton channel. CF(1) has five subunits: alpha(3), beta(3), gamma(1), delta(1), epsilon(1). CF(0) has three main subunits: a(1), b(2) and c(9-12). The alpha and beta chains form an alternating ring which encloses part of the gamma chain. CF(1) is attached to CF(0) by a central stalk formed by the gamma and epsilon chains, while a peripheral stalk is formed by the delta and b chains.

It localises to the cell inner membrane. The enzyme catalyses ATP + H2O + 4 H(+)(in) = ADP + phosphate + 5 H(+)(out). Functionally, produces ATP from ADP in the presence of a proton gradient across the membrane. The alpha chain is a regulatory subunit. The chain is ATP synthase subunit alpha from Pseudomonas aeruginosa (strain LESB58).